The primary structure comprises 393 residues: Acyl-homoserine-lactone synthase OpaM (393 aa).

The protein belongs to the LuxM / VanM family.

It catalyses the reaction a fatty acyl-[ACP] + S-adenosyl-L-methionine = an N-acyl-L-homoserine lactone + S-methyl-5'-thioadenosine + holo-[ACP] + H(+). This chain is Acyl-homoserine-lactone synthase OpaM (opaM), found in Vibrio parahaemolyticus serotype O3:K6 (strain RIMD 2210633).